The following is a 326-amino-acid chain: MLTLARQQQRQNIRWLLCLSVLMLLALLLSLCAGEQWISPGDWFTPRGELFVWQIRLPRTLAVLLVGAALAISGAVMQALFENPLAEPGLLGVSNGAGVGLIAAVLLGQGQLPNWALGLCAIAGALIITLILLRFARRHLSTSRLLLAGVALGIICSALMTWAIYFSTSVDLRQLMYWMMGGFGGVDWRQSWLMLALIPVLLWICCQSRPMNMLALGEISARQLGLPLWFWRNVLVAATGWMVGVSVALAGAIGFIGLVIPHILRLCGLTDHRVLLPGCALAGASALLLADIVARLALAAAELPIGVVTATLGAPVFIWLLLKARR.

Helical transmembrane passes span 15-35 (WLLCLSVLMLLALLLSLCAGE), 61-81 (LAVLLVGAALAISGAVMQALF), 88-108 (PGLLGVSNGAGVGLIAAVLLG), 112-132 (LPNWALGLCAIAGALIITLIL), 146-166 (LLAGVALGIICSALMTWAIYF), 184-204 (GGVDWRQSWLMLALIPVLLWI), 240-260 (GWMVGVSVALAGAIGFIGLVI), 274-294 (VLLPGCALAGASALLLADIVA), and 302-322 (ELPIGVVTATLGAPVFIWLLL).

Belongs to the binding-protein-dependent transport system permease family. FecCD subfamily. As to quaternary structure, the complex is composed of two ATP-binding proteins (BtuD), two transmembrane proteins (BtuC) and a solute-binding protein (BtuF).

It is found in the cell inner membrane. Functionally, part of the ABC transporter complex BtuCDF involved in vitamin B12 import. Involved in the translocation of the substrate across the membrane. The sequence is that of Vitamin B12 import system permease protein BtuC from Escherichia coli O9:H4 (strain HS).